A 245-amino-acid polypeptide reads, in one-letter code: Protein crossbronx (245 aa).

The 158-residue stretch at 20-177 (HQEYKILAEY…VQESIAESKA (158 aa)) folds into the UBC core domain.

Belongs to the ubiquitin-conjugating enzyme family. FTS subfamily.

The polypeptide is Protein crossbronx (cbx) (Drosophila mojavensis (Fruit fly)).